The sequence spans 286 residues: Beta-lactamase SHV-46 (286 aa).

Residues methionine 1–alanine 21 form the signal peptide. Serine 66 (acyl-ester intermediate) is an active-site residue. A disulfide bridge links cysteine 73 with cysteine 119. The Proton acceptor role is filled by glutamate 164. Lysine 230–glycine 232 is a substrate binding site.

It belongs to the class-A beta-lactamase family.

It catalyses the reaction a beta-lactam + H2O = a substituted beta-amino acid. This Klebsiella oxytoca protein is Beta-lactamase SHV-46 (bla).